A 380-amino-acid chain; its full sequence is MAKRDYYEILGVSKNATKEEIKKAYRKLSKKYHPDINKEPDAAEKFKEIKEAYEVLSDDQKRAHYDQFGHADPNQGFGGFRSDDFDFGGFSGFGGFEDIFSTFFGGGRRRDPNAPRAGADLQYTMTLTFEEAAFGKETDIEIPREETCDTCHGTGAKPGTKKETCSYCHGTGQISTEQSTPFGRIVNRRTCPYCGGTGQYIKEKCTTCGGTGRVKKRKKIHVKIPAGIDDGQQLRVAGQGEPGINGGPPGDLYIVFHVEPHEFFERDGDDIYCEIPLTFAQAALGDEIEVPTLHGKVKLKIPAGTQTGTKFRLKGKGVPNVRGYGYGDQHVIVRVVTPTKLTEKQKQLLREFDQLGGSSMHQGPYGRFFDKVKKAFKGES.

Positions Asp5 to Gly69 constitute a J domain. The CR-type zinc finger occupies Gly135–Arg217. Zn(2+)-binding residues include Cys148, Cys151, Cys165, Cys168, Cys191, Cys194, Cys205, and Cys208. CXXCXGXG motif repeat units lie at residues Cys148 to Gly155, Cys165 to Gly172, Cys191 to Gly198, and Cys205 to Gly212.

It belongs to the DnaJ family. In terms of assembly, homodimer. The cofactor is Zn(2+).

Its subcellular location is the cytoplasm. Functionally, participates actively in the response to hyperosmotic and heat shock by preventing the aggregation of stress-denatured proteins and by disaggregating proteins, also in an autonomous, DnaK-independent fashion. Unfolded proteins bind initially to DnaJ; upon interaction with the DnaJ-bound protein, DnaK hydrolyzes its bound ATP, resulting in the formation of a stable complex. GrpE releases ADP from DnaK; ATP binding to DnaK triggers the release of the substrate protein, thus completing the reaction cycle. Several rounds of ATP-dependent interactions between DnaJ, DnaK and GrpE are required for fully efficient folding. Also involved, together with DnaK and GrpE, in the DNA replication of plasmids through activation of initiation proteins. In Geobacillus sp. (strain WCH70), this protein is Chaperone protein DnaJ.